A 397-amino-acid polypeptide reads, in one-letter code: Odorant receptor 98a (397 aa).

The Cytoplasmic segment spans residues 1 to 43; sequence MLFNYLRKPNPTNLLTSPDSFRYFEYGMFCMGWHTPATHKIIY. A helical membrane pass occupies residues 44-64; the sequence is YITSCLIFAWCAVYLPIGIII. The Extracellular portion of the chain corresponds to 65-77; that stretch reads SFKTDINTFTPNE. The chain crosses the membrane as a helical span at residues 78-98; the sequence is LLTVMQLFFNSVGMPFKVLFF. At 99 to 138 the chain is on the cytoplasmic side; sequence NLYISGFYKAKKLLSEMDKRCTTLKERVEVHQGVVRCNKA. The helical transmembrane segment at 139 to 159 threads the bilayer; sequence YLIYQFIYTAYTISTFLSAAL. The Extracellular segment spans residues 160–192; that stretch reads SGKLPWRIYNPFVDFRESRSSFWKAALNETALM. An N-linked (GlcNAc...) asparagine glycan is attached at asparagine 187. A helical membrane pass occupies residues 193 to 213; it reads LFAVTQTLMSDIYPLLYGLIL. Topologically, residues 214-266 are cytoplasmic; sequence RVHLKLLRLRVESLCTDSGKSDAENEQDLIKCIKDHNLIIDYAAAIRPAVTRT. A helical membrane pass occupies residues 267–287; the sequence is IFVQFLLIGICLGLSMINLLF. The Extracellular portion of the chain corresponds to 288–293; the sequence is FADIWT. The helical transmembrane segment at 294–314 threads the bilayer; the sequence is GLATVAYINGLMVQTFPFCFV. The Cytoplasmic segment spans residues 315–354; sequence CDLLKKDCELLVSAIFHSNWINSSRSYKSSLRYFLKNAQK. A helical transmembrane segment spans residues 355–375; that stretch reads SIAFTAGSIFPISTGSNIKVA. At 376–397 the chain is on the extracellular side; sequence KLAFSVVTFVNQLNIADRLTKN.

The protein belongs to the insect chemoreceptor superfamily. Heteromeric odorant receptor channel (TC 1.A.69) family. Or2a subfamily. Interacts with Orco. Complexes exist early in the endomembrane system in olfactory sensory neurons (OSNs), coupling these complexes to the conserved ciliary trafficking pathway. Expressed in olfactory sensory neurons in the antenna.

It localises to the cell membrane. Odorant receptor which mediates acceptance or avoidance behavior, depending on its substrates. The odorant receptor repertoire encodes a large collection of odor stimuli that vary widely in identity, intensity, and duration. May form a complex with Orco to form odorant-sensing units, providing sensitive and prolonged odorant signaling and calcium permeability. This is Odorant receptor 98a (Or98a) from Drosophila melanogaster (Fruit fly).